We begin with the raw amino-acid sequence, 399 residues long: Elongation factor Tu (399 aa).

The region spanning K10–E204 is the tr-type G domain. Residues G19 to T26 form a G1 region. G19 to T26 is a binding site for GTP. T26 provides a ligand contact to Mg(2+). The interval G60–N64 is G2. The interval D81 to G84 is G3. GTP-binding positions include D81 to H85 and N136 to D139. The segment at N136–D139 is G4. The segment at S174–L176 is G5.

It belongs to the TRAFAC class translation factor GTPase superfamily. Classic translation factor GTPase family. EF-Tu/EF-1A subfamily. Monomer.

The protein localises to the cytoplasm. It catalyses the reaction GTP + H2O = GDP + phosphate + H(+). GTP hydrolase that promotes the GTP-dependent binding of aminoacyl-tRNA to the A-site of ribosomes during protein biosynthesis. The protein is Elongation factor Tu of Synechocystis sp. (strain ATCC 27184 / PCC 6803 / Kazusa).